We begin with the raw amino-acid sequence, 571 residues long: Vesicle-associated protein 1-4 (571 aa).

One can recognise an MSP 1 domain in the interval 1-126 (MSTDELLTFD…EETIFKIIYV (126 aa)). The segment at 132–154 (QSPVQEGLEDGSSPSASVSDKGN) is disordered. Polar residues predominate over residues 143–153 (SSPSASVSDKG). The MSP 2 domain occupies 176–296 (LLIIDPVDVQ…EETRLKVMYV (121 aa)). The interval 297–322 (TPPQPPSPVQEGTEEGSSPRASVSDN) is disordered. The span at 311–322 (EGSSPRASVSDN) shows a compositional bias: polar residues. The TIR domain occupies 356-493 (PQYQVFINFR…KWKEALSSVF (138 aa)). The active site involves Glu-430.

It belongs to the VAMP-associated protein (VAP) (TC 9.B.17) family.

The catalysed reaction is NAD(+) + H2O = ADP-D-ribose + nicotinamide + H(+). May play a role in vesicle trafficking. The protein is Vesicle-associated protein 1-4 (PVA14) of Arabidopsis thaliana (Mouse-ear cress).